Reading from the N-terminus, the 435-residue chain is Probable exopolygalacturonase X (435 aa).

The N-terminal stretch at 1 to 22 (MRLTHVLSHTLGLLALGATAEA) is a signal peptide. Residues 31–55 (CSPKKPFRPLPTSSSRDKTCHVRSH) are disordered. Over residues 45 to 55 (SRDKTCHVRSH) the composition is skewed to basic and acidic residues. 4 N-linked (GlcNAc...) asparagine glycosylation sites follow: Asn93, Asn112, Asn128, and Asn198. PbH1 repeat units follow at residues 199–229 (SSNV…DTYR) and 230–251 (SNNI…SFKP). Asp244 (proton donor) is an active-site residue. Cys246 and Cys263 are disulfide-bonded. N-linked (GlcNAc...) asparagine glycosylation is found at Asn252 and Asn264. The stretch at 253-273 (STNILVQNLHCNGSHGISVGS) is one PbH1 3 repeat. The active site involves His267. Residues Asn291, Asn296, Asn328, and Asn353 are each glycosylated (N-linked (GlcNAc...) asparagine). One copy of the PbH1 4 repeat lies at 326–347 (VKNITYDTALIDNVDWAIEITQ). Residues 361-409 (PSSLTISDVHIKNFRGTTSGSEDPYVGTIVCSSPDTCSDIYTSNINVTS) form a PbH1 5 repeat. A disulfide bond links Cys391 and Cys397. Residues Asn406 and Asn429 are each glycosylated (N-linked (GlcNAc...) asparagine).

The protein belongs to the glycosyl hydrolase 28 family.

It is found in the secreted. The enzyme catalyses [(1-&gt;4)-alpha-D-galacturonosyl](n) + H2O = alpha-D-galacturonate + [(1-&gt;4)-alpha-D-galacturonosyl](n-1). In terms of biological role, specific in hydrolyzing the terminal glycosidic bond of polygalacturonic acid and oligogalacturonates. The polypeptide is Probable exopolygalacturonase X (pgaX) (Aspergillus niger (strain ATCC MYA-4892 / CBS 513.88 / FGSC A1513)).